We begin with the raw amino-acid sequence, 402 residues long: CinA-like protein (402 aa).

The protein belongs to the CinA family.

In Escherichia coli O17:K52:H18 (strain UMN026 / ExPEC), this protein is CinA-like protein.